Reading from the N-terminus, the 676-residue chain is Hemin receptor (676 aa).

The N-terminal stretch at 1-28 (MLRSTSDRFRWSSLSLAIACTLPLATQA) is a signal peptide. Positions 44–51 (DTMVVTAT) match the TonB box motif. Residues 56–167 (SSFEAPMMVT…LGGVIAYETV (112 aa)) form the TBDR plug domain. Positions 178–676 (NSGYRVYSSA…NVKFFVSYQW (499 aa)) constitute a TBDR beta-barrel domain. Positions 659-676 (QGIPQDGRNVKFFVSYQW) match the TonB C-terminal box motif.

This sequence belongs to the TonB-dependent receptor family.

The protein localises to the cell outer membrane. In terms of biological role, this protein is involved in the initial step of iron uptake by binding hemin, an iron chelatin siderophore that allows the bacteria to extract iron from the environment. The chain is Hemin receptor (hmuR) from Yersinia pestis.